Here is a 482-residue protein sequence, read N- to C-terminus: Glutamyl-tRNA(Gln) amidotransferase subunit A (482 aa).

Catalysis depends on charge relay system residues Lys-75 and Ser-150. Residue Ser-174 is the Acyl-ester intermediate of the active site.

This sequence belongs to the amidase family. GatA subfamily. As to quaternary structure, heterotrimer of A, B and C subunits.

The enzyme catalyses L-glutamyl-tRNA(Gln) + L-glutamine + ATP + H2O = L-glutaminyl-tRNA(Gln) + L-glutamate + ADP + phosphate + H(+). Functionally, allows the formation of correctly charged Gln-tRNA(Gln) through the transamidation of misacylated Glu-tRNA(Gln) in organisms which lack glutaminyl-tRNA synthetase. The reaction takes place in the presence of glutamine and ATP through an activated gamma-phospho-Glu-tRNA(Gln). This Rippkaea orientalis (strain PCC 8801 / RF-1) (Cyanothece sp. (strain PCC 8801)) protein is Glutamyl-tRNA(Gln) amidotransferase subunit A.